A 180-amino-acid polypeptide reads, in one-letter code: Pro-glucagon (180 aa).

The N-terminal stretch at 1–20 (MKTIYFVAGLLIMLVQGSWQ) is a signal peptide. The segment at 25–58 (DTEENPRSFPASQTEAHEDPDEMNEDKRHSQGTF) is disordered. Position 54 is a phosphoserine (serine 54). Residues 84-89 (NRNNIA) constitute a propeptide that is removed on maturation. Phosphoserine occurs at positions 105 and 108. Arginine 127 carries the arginine amide modification. Positions 131 to 145 (DFPEEVAIAEELGRR) are excised as a propeptide. Phosphoserine occurs at positions 150 and 152.

It belongs to the glucagon family. In terms of processing, proglucagon is post-translationally processed in a tissue-specific manner in pancreatic A cells and intestinal L cells. In pancreatic A cells, the major bioactive hormone is glucagon cleaved by PCSK2/PC2. In the intestinal L cells PCSK1/PC1 liberates GLP-1, GLP-2, glicentin and oxyntomodulin. GLP-1 is further N-terminally truncated by post-translational processing in the intestinal L cells resulting in GLP-1(7-37) GLP-1-(7-36)amide. The C-terminal amidation is neither important for the metabolism of GLP-1 nor for its effects on the endocrine pancreas. As to expression, secreted in the A cells of the islets of Langerhans. Secreted in the A cells of the islets of Langerhans. Secreted from enteroendocrine L cells throughout the gastrointestinal tract. Also secreted in selected neurons in the brain. In terms of tissue distribution, secreted from enteroendocrine cells throughout the gastrointestinal tract. Also secreted in selected neurons in the brain. As to expression, secreted from enteroendocrine cells throughout the gastrointestinal tract.

It is found in the secreted. Functionally, plays a key role in glucose metabolism and homeostasis. Regulates blood glucose by increasing gluconeogenesis and decreasing glycolysis. A counterregulatory hormone of insulin, raises plasma glucose levels in response to insulin-induced hypoglycemia. Plays an important role in initiating and maintaining hyperglycemic conditions in diabetes. In terms of biological role, potent stimulator of glucose-dependent insulin release. Also stimulates insulin release in response to IL6. Plays important roles on gastric motility and the suppression of plasma glucagon levels. May be involved in the suppression of satiety and stimulation of glucose disposal in peripheral tissues, independent of the actions of insulin. Has growth-promoting activities on intestinal epithelium. May also regulate the hypothalamic pituitary axis (HPA) via effects on LH, TSH, CRH, oxytocin, and vasopressin secretion. Increases islet mass through stimulation of islet neogenesis and pancreatic beta cell proliferation. Inhibits beta cell apoptosis. Stimulates intestinal growth and up-regulates villus height in the small intestine, concomitant with increased crypt cell proliferation and decreased enterocyte apoptosis. The gastrointestinal tract, from the stomach to the colon is the principal target for GLP-2 action. Plays a key role in nutrient homeostasis, enhancing nutrient assimilation through enhanced gastrointestinal function, as well as increasing nutrient disposal. Stimulates intestinal glucose transport and decreases mucosal permeability. Its function is as follows. Significantly reduces food intake. Inhibits gastric emptying in humans. Suppression of gastric emptying may lead to increased gastric distension, which may contribute to satiety by causing a sensation of fullness. Functionally, may modulate gastric acid secretion and the gastro-pyloro-duodenal activity. May play an important role in intestinal mucosal growth in the early period of life. This Mus musculus (Mouse) protein is Pro-glucagon (Gcg).